A 169-amino-acid polypeptide reads, in one-letter code: Required for excision 1-B domain-containing protein (169 aa).

The polypeptide is Required for excision 1-B domain-containing protein (Mus musculus (Mouse)).